The following is a 503-amino-acid chain: Aminoaldehyde dehydrogenase 2, peroxisomal (503 aa).

Na(+) contacts are provided by isoleucine 28, aspartate 99, and leucine 189. Residue 238–245 participates in NAD(+) binding; the sequence is GSTMTGSK. The Proton acceptor role is filled by glutamate 260. Residues cysteine 294 and glutamate 393 each contribute to the NAD(+) site. Cysteine 294 (nucleophile) is an active-site residue. Residues 501-503 carry the Microbody targeting signal motif; the sequence is SKL.

This sequence belongs to the aldehyde dehydrogenase family. In terms of tissue distribution, expressed in leaves, flowers and fruits.

It localises to the peroxisome. The enzyme catalyses 4-aminobutanal + NAD(+) + H2O = 4-aminobutanoate + NADH + 2 H(+). It catalyses the reaction 3-aminopropanal + NAD(+) + H2O = beta-alanine + NADH + 2 H(+). The protein operates within amine and polyamine biosynthesis; betaine biosynthesis via choline pathway; betaine from betaine aldehyde: step 1/1. In terms of biological role, dehydrogenase that catalyzes the oxidation of several aminoaldehydes. Metabolizes and detoxifies aldehyde products of polyamine degradation to non-toxic amino acids. Catalyzes the oxidation of 4-aminobutanal and 3-aminopropanal to 4-aminobutanoate and beta-alanine, respectively. This chain is Aminoaldehyde dehydrogenase 2, peroxisomal, found in Malus domestica (Apple).